Consider the following 1270-residue polypeptide: Myosin-3 (1270 aa).

A disordered region spans residues 1–20; that stretch reads MAVIKKGARRKDVKEPKKRS. The Myosin motor domain maps to 36 to 715; that stretch reads VGVSDLTLLS…SLFALEDMRD (680 aa). An ATP-binding site is contributed by 129-136; it reads GESGAGKT. S357 is subject to Phosphoserine. The actin-binding stretch occupies residues 404-486; sequence SIGILDIYGF…PGILAAMNDS (83 aa). IQ domains are found at residues 719-739 and 740-765; these read YNMAARIQRAWRRFLQRRIDA and AIKIQRTIREKKGGNKYVKLRDYGTK. A TH1 domain is found at 771-961; it reads KERRSMSLLG…TIYVRRGHPA (191 aa). 3 disordered regions span residues 951 to 1015, 1029 to 1136, and 1215 to 1270; these read STIY…QKPV, YNPK…GSSS, and VQFG…DDDW. Residues 980-1000 are compositionally biased toward basic residues; the sequence is IKSKKSKHKSTHKHTHSHRSH. Positions 1066–1078 are enriched in low complexity; sequence KKASSSHKSSSAK. Over residues 1089–1098 the composition is skewed to basic and acidic residues; sequence GVEKNKEPLK. A compositionally biased stretch (pro residues) spans 1107-1116; it reads PIPPPPPPMG. The 63-residue stretch at 1118–1180 folds into the SH3 domain; the sequence is PKDPKFEAAY…PTAYMTPYKD (63 aa). Positions 1215–1234 are enriched in polar residues; sequence VQFGSATVGPTSDNQSNPVG. A compositionally biased stretch (acidic residues) spans 1256–1270; the sequence is ADDDDNDDGDDDDDW.

The protein belongs to the TRAFAC class myosin-kinesin ATPase superfamily. Myosin family. As to quaternary structure, interacts (via myosin motor domain) with SHE4; this interaction is important for proper localization and may regulate the interaction of the motor domain with actin. Interacts (via SH3 domain) with VRP1; this interaction is required for localization to sites of polarized growth and may regulate the interaction of the tail domain with actin. Interacts (via SH3 domain) with PAN1; this interaction is important for late stages of endocytopsis. Interacts (via SH3 domain) with BBC1 and LAS17. Interacts (via C-terminal acidic tail) with ARC19 and ARC40; ARC19 and ARC40 are Arp2/3 complex subunits. Post-translationally, phosphorylation of the TEDS site (Ser-357) is required for the polarization of the actin cytoskeleton and for ligand-induced, but not for constitutive internalization of STE2. Phosphorylation probably activates the myosin-I ATPase. Ser-357 is phosphorylated by CLA4 and STE20 in vitro.

Its subcellular location is the cytoplasm. The protein resides in the cytoskeleton. It is found in the actin patch. Its function is as follows. One of two redundant type-I myosins implicated in the organization of the actin cytoskeleton. Required for proper actin cytoskeleton polarization and for the internalization step in endocytosis. At the cell cortex, assembles in patch-like structures together with proteins from the actin-polymerizing machinery and promotes actin assembly. Functions redundantly with LAS17 as actin nucleation-promoting factor (NPF) for the Arp2/3 complex. Motor domain phosphorylation by PAK kinases CLA4 and STE20 promotes CDC42-regulated actin assembly. Functions together with the NPF PAN1 in late stages of endocytosis. Motor domain phosphorylation by PDK1 kinases PKH1 and PKH2, and by SGK kinases YPK1 and YPK2, promotes ligand-induced, but not constitutive endocytosis of the G protein-coupled receptor STE2. This Saccharomyces cerevisiae (strain YJM789) (Baker's yeast) protein is Myosin-3 (MYO3).